The following is a 171-amino-acid chain: Flavodoxin (171 aa).

Residues isoleucine 4–isoleucine 165 form the Flavodoxin-like domain.

Belongs to the flavodoxin family. It depends on FMN as a cofactor.

In terms of biological role, low-potential electron donor to a number of redox enzymes. In Buchnera aphidicola subsp. Acyrthosiphon pisum (strain APS) (Acyrthosiphon pisum symbiotic bacterium), this protein is Flavodoxin (fldA).